The chain runs to 172 residues: MDHLKKYITEINDYPKKGIVFKDLNPIYKEPKIWKELMFPLQNLISTKKPDYIAGIESRGFISASALAFKLEIGLITIRKPNKLPGEVIGTNYKLEYGEDRLEIQQNIMEKDSKIMLFDDLLATGGTAGAAGNLIKKAGGNLIGYAFLVELTELKGRENLDSNLFVETLIKY.

It belongs to the purine/pyrimidine phosphoribosyltransferase family. As to quaternary structure, homodimer.

Its subcellular location is the cytoplasm. It catalyses the reaction AMP + diphosphate = 5-phospho-alpha-D-ribose 1-diphosphate + adenine. The protein operates within purine metabolism; AMP biosynthesis via salvage pathway; AMP from adenine: step 1/1. Its function is as follows. Catalyzes a salvage reaction resulting in the formation of AMP, that is energically less costly than de novo synthesis. The sequence is that of Adenine phosphoribosyltransferase from Prochlorococcus marinus (strain NATL2A).